The following is a 773-amino-acid chain: Cadherin-5 (773 aa).

A signal peptide spans 1-18 (MKKLILLFSLFLAPAFSY). Positions 19 to 40 (KENQKINQNFSSNNTSHKRLKR) are excised as a propeptide. Asn27, Asn31, and Asn32 each carry an N-linked (GlcNAc...) asparagine glycan. Cadherin domains are found at residues 39 to 144 (KRDW…APIF), 145 to 251 (VQKI…FPVF), 252 to 366 (KHPS…PPVF), 367 to 474 (TKLS…APEL), and 474 to 582 (LVYP…DFTF). Residues 41-595 (DWIWNRMHIR…RAKQVGVSVQ (555 aa)) lie on the Extracellular side of the membrane. Residues Glu51, Glu52, Asp102, and Glu104 each coordinate Ca(2+). Asn121 is a glycosylation site (N-linked (GlcNAc...) asparagine). Ca(2+)-binding residues include Asp136, Ile137, Asn138, Asp139, and Asn140. Asn150 carries an N-linked (GlcNAc...) asparagine glycan. Ca(2+)-binding residues include Asp170, Asp172, His179, and Asp224. Residues Asn263, Asn437, Asn519, and Asn531 are each glycosylated (N-linked (GlcNAc...) asparagine). Residues 596–617 (ALVAIFICIFTIIAVIALLILL) traverse the membrane as a helical segment. Residues 618–773 (RKRHKKDLSG…GSEPNEDFVY (156 aa)) are Cytoplasmic-facing.

In terms of processing, N-glycosylated. Post-translationally, O-glycosylated.

It localises to the cell junction. Its subcellular location is the adherens junction. It is found in the cell membrane. The protein resides in the cytoplasm. Functionally, cadherins are calcium-dependent cell adhesion proteins. They preferentially interact with themselves in a homophilic manner in connecting cells; cadherins may thus contribute to the sorting of heterogeneous cell types. This cadherin may play a important role in endothelial cell biology through control of the cohesion and organization of the intercellular junctions. Plays a role in coupling actin fibers to cell junctions in endothelial cells. Associates with CTNND1/p120-catenin to control CADH5 endocytosis. The chain is Cadherin-5 from Gallus gallus (Chicken).